Here is a 354-residue protein sequence, read N- to C-terminus: 5,10-methenyltetrahydromethanopterin hydrogenase (354 aa).

The protein belongs to the HMD family.

It carries out the reaction 5,10-methenyl-5,6,7,8-tetrahydromethanopterin + H2 = 5,10-methylenetetrahydromethanopterin + H(+). It participates in one-carbon metabolism; methanogenesis from CO(2); 5,10-methylene-5,6,7,8-tetrahydromethanopterin from 5,10-methenyl-5,6,7,8-tetrahydromethanopterin (hydrogen route): step 1/1. Functionally, catalyzes the reversible reduction of methenyl-H(4)MPT(+) to methylene-H(4)MPT. In Methanococcus vannielii (strain ATCC 35089 / DSM 1224 / JCM 13029 / OCM 148 / SB), this protein is 5,10-methenyltetrahydromethanopterin hydrogenase.